A 223-amino-acid chain; its full sequence is Small ribosomal subunit protein uS5 (223 aa).

Residues 1–48 are disordered; the sequence is MPGRQRRDGGSGPAGQNGPNSGDNSNARGDNRGGGRDRRDGGRGGNAA. The segment covering 29 to 42 has biased composition (basic and acidic residues); that stretch reads GDNRGGGRDRRDGG. The region spanning 53–116 is the S5 DRBM domain; sequence FIERVVTINR…EEARKSFFRV (64 aa).

This sequence belongs to the universal ribosomal protein uS5 family. In terms of assembly, part of the 30S ribosomal subunit. Contacts proteins S4 and S8.

With S4 and S12 plays an important role in translational accuracy. Functionally, located at the back of the 30S subunit body where it stabilizes the conformation of the head with respect to the body. The polypeptide is Small ribosomal subunit protein uS5 (Rhodococcus erythropolis (strain PR4 / NBRC 100887)).